A 1180-amino-acid polypeptide reads, in one-letter code: DNA-directed RNA polymerase subunit beta (1180 aa).

The segment covering 1154-1164 has biased composition (acidic residues); the sequence is EMKELDDEDEQ. The interval 1154–1180 is disordered; sequence EMKELDDEDEQASDKLNLNIDSTESNV. A compositionally biased stretch (polar residues) spans 1167-1180; that stretch reads DKLNLNIDSTESNV.

This sequence belongs to the RNA polymerase beta chain family. As to quaternary structure, the RNAP catalytic core consists of 2 alpha, 1 beta, 1 beta' and 1 omega subunit. When a sigma factor is associated with the core the holoenzyme is formed, which can initiate transcription.

It carries out the reaction RNA(n) + a ribonucleoside 5'-triphosphate = RNA(n+1) + diphosphate. Its function is as follows. DNA-dependent RNA polymerase catalyzes the transcription of DNA into RNA using the four ribonucleoside triphosphates as substrates. The polypeptide is DNA-directed RNA polymerase subunit beta (Halalkalibacterium halodurans (strain ATCC BAA-125 / DSM 18197 / FERM 7344 / JCM 9153 / C-125) (Bacillus halodurans)).